A 251-amino-acid chain; its full sequence is HTH-type transcriptional regulator UlaR (251 aa).

Residues 3-58 (EAQRHQILLEMLAQLGFVTVEKVVERLGISPATARRDINKLDESGKLKKVRNGAEA) enclose the HTH deoR-type domain. A DNA-binding region (H-T-H motif) is located at residues 20–39 (VTVEKVVERLGISPATARRD).

The protein localises to the cytoplasm. Its function is as follows. Represses ulaG and the ulaABCDEF operon. The protein is HTH-type transcriptional regulator UlaR of Escherichia coli (strain SMS-3-5 / SECEC).